We begin with the raw amino-acid sequence, 747 residues long: Photosystem I P700 chlorophyll a apoprotein A2 (747 aa).

The next 8 membrane-spanning stretches (helical) occupy residues 46-69 (LFAT…FHIA), 135-158 (LFQG…LHLQ), 175-199 (LNHH…HVAI), 273-291 (IAHH…GHMY), 341-364 (LHFQ…QHMG), 380-406 (SALY…IFFV), 428-450 (ALIS…IYVH), and 530-548 (FLVH…LILI). [4Fe-4S] cluster-binding residues include C572 and C581. Transmembrane regions (helical) follow at residues 588-609 (ATYL…YWHW) and 656-678 (LSPW…MFLI). 3 residues coordinate divinyl chlorophyll a: H667, M675, and Y683. W684 is a phylloquinone binding site. A helical membrane pass occupies residues 720–740 (LVGLTHFTVGNFVTFGAFVIA).

Belongs to the PsaA/PsaB family. The PsaA/B heterodimer binds the P700 divinyl chlorophyll special pair and subsequent electron acceptors. PSI consists of a core antenna complex that captures photons, and an electron transfer chain that converts photonic excitation into a charge separation. The cyanobacterial PSI reaction center is composed of one copy each of PsaA,B,C,D,E,F,I,J,K,L,M and X, and forms trimeric complexes. PSI electron transfer chain: 5 divinyl chlorophyll a, 1 divinyl chlorophyll a', 2 phylloquinones and 3 4Fe-4S clusters. PSI core antenna: 90 divinyl chlorophyll a, 22 carotenoids, 3 phospholipids and 1 galactolipid. P700 is a divinyl chlorophyll a/divinyl chlorophyll a' dimer, A0 is one or more divinyl chlorophyll a, A1 is one or both phylloquinones and FX is a shared 4Fe-4S iron-sulfur center. is required as a cofactor.

It is found in the cellular thylakoid membrane. The catalysed reaction is reduced [plastocyanin] + hnu + oxidized [2Fe-2S]-[ferredoxin] = oxidized [plastocyanin] + reduced [2Fe-2S]-[ferredoxin]. Functionally, psaA and PsaB bind P700, the primary electron donor of photosystem I (PSI), as well as the electron acceptors A0, A1 and FX. PSI is a plastocyanin/cytochrome c6-ferredoxin oxidoreductase, converting photonic excitation into a charge separation, which transfers an electron from the donor P700 chlorophyll pair to the spectroscopically characterized acceptors A0, A1, FX, FA and FB in turn. Oxidized P700 is reduced on the lumenal side of the thylakoid membrane by plastocyanin or cytochrome c6. This is Photosystem I P700 chlorophyll a apoprotein A2 from Prochlorococcus marinus (strain SARG / CCMP1375 / SS120).